The chain runs to 321 residues: Pectinesterase (321 aa).

Residue threonine 1 is modified to N-acetylthreonine. Asparagine 75 carries N-linked (GlcNAc...) (complex) asparagine glycosylation. 2 residues coordinate substrate: threonine 84 and glutamine 114. Aspartate 137 (proton donor) is an active-site residue. Cysteine 151 and cysteine 171 are disulfide-bonded. Aspartate 158 serves as the catalytic Nucleophile. Residues arginine 226 and tryptophan 228 each coordinate substrate. Residues asparagine 275, asparagine 290, and asparagine 319 are each glycosylated (N-linked (GlcNAc...) (complex) asparagine).

This sequence belongs to the pectinesterase family. Post-translationally, the N-glycans attached at Asn-75, Asn-275, Asn-290 and Asn-319 are complex oligosaccharides containing xylose, fucose, hexose and N-acetylglucosamine.

It catalyses the reaction [(1-&gt;4)-alpha-D-galacturonosyl methyl ester](n) + n H2O = [(1-&gt;4)-alpha-D-galacturonosyl](n) + n methanol + n H(+). It functions in the pathway glycan metabolism; pectin degradation; 2-dehydro-3-deoxy-D-gluconate from pectin: step 1/5. Inhibited by PMEI. The chain is Pectinesterase from Actinidia deliciosa (Kiwi).